Reading from the N-terminus, the 837-residue chain is Tuftelin-interacting protein 11 (837 aa).

The span at 1–13 shows a compositional bias: basic and acidic residues; it reads MSLSHLYRDGEGH. Disordered regions lie at residues 1-31, 54-73, and 85-133; these read MSLS…DWDL, WAER…RARD, and LKKG…KGFA. The tract at residues 1–50 is required for interaction with DHX15; the sequence is MSLSHLYRDGEGHMDDDDDERENFEITDWDLQNEFNPNRQRHWQTKEEAT. Ser2 carries the post-translational modification Phosphoserine. Over residues 14-28 the composition is skewed to acidic residues; that stretch reads MDDDDDERENFEITD. Over residues 54–64 the composition is skewed to basic and acidic residues; it reads WAERDSDEERP. Residues Ser59 and Ser98 each carry the phosphoserine modification. Positions 91–102 are enriched in acidic residues; that stretch reads EEAELEDSEDEE. Positions 103 to 116 are enriched in basic and acidic residues; it reads KPVKQDDFPKDFGP. Ser144 bears the Phosphoserine mark. In terms of domain architecture, G-patch spans 149-195; the sequence is TKGIGQKLLQKMGYVPGRGLGKNAQGIINPIEAKQRKGKGAVGAYGS. 2 disordered regions span residues 183 to 236 and 289 to 312; these read QRKG…KKKP and HNVP…EAKA. Phosphoserine is present on Ser210. Basic and acidic residues predominate over residues 217–231; that stretch reads EFQKELSQWRKDPSG. The Nuclear localization signal motif lies at 700–705; that stretch reads VKDKFN. Positions 710–734 are required for nuclear speckle localization; that stretch reads IMNRAVSSNVGAYMQPGARENIAYL.

The protein belongs to the TFP11/STIP family. In terms of assembly, identified in the spliceosome C complex. Found in the Intron Large (IL) complex, a post-mRNA release spliceosomal complex containing the excised intron, U2, U5 and U6 snRNPs, and splicing factors. Interacts with TUFT1. Interacts with DHX15; indicative for a recruitment of DHX15 to the IL complex. Interacts with GCFC2.

The protein resides in the cytoplasm. Its subcellular location is the nucleus. Involved in pre-mRNA splicing, specifically in spliceosome disassembly during late-stage splicing events. Intron turnover seems to proceed through reactions in two lariat-intron associated complexes termed Intron Large (IL) and Intron Small (IS). In cooperation with DHX15 seems to mediate the transition of the U2, U5 and U6 snRNP-containing IL complex to the snRNP-free IS complex leading to efficient debranching and turnover of excised introns. May play a role in the differentiation of ameloblasts and odontoblasts or in the forming of the enamel extracellular matrix. The protein is Tuftelin-interacting protein 11 (TFIP11) of Canis lupus familiaris (Dog).